We begin with the raw amino-acid sequence, 243 residues long: Small ribosomal subunit protein uS2c (243 aa).

This sequence belongs to the universal ribosomal protein uS2 family.

The protein resides in the plastid. It is found in the chloroplast. The polypeptide is Small ribosomal subunit protein uS2c (rps2) (Cyanidium caldarium (Red alga)).